Here is a 109-residue protein sequence, read N- to C-terminus: Nucleoid-associated protein HS_1309 (109 aa).

It belongs to the YbaB/EbfC family. As to quaternary structure, homodimer.

It localises to the cytoplasm. It is found in the nucleoid. Binds to DNA and alters its conformation. May be involved in regulation of gene expression, nucleoid organization and DNA protection. The protein is Nucleoid-associated protein HS_1309 of Histophilus somni (strain 129Pt) (Haemophilus somnus).